We begin with the raw amino-acid sequence, 500 residues long: E3 ubiquitin-protein ligase TRIM69 (500 aa).

Residues 1-22 are disordered; sequence MEVSSRPPSNFDPGNYVEMSDP. Positions 1 to 153 are necessary for nuclear localization; that stretch reads MEVSSRPPSN…SMGQSKDFLQ (153 aa). The segment at 42–83 adopts an RING-type zinc-finger fold; it reads CPLCNDWFRDPLMLTCGHNFCQDCIQSFWKVHSKETFCPDCK. Residues 217 to 256 adopt a coiled-coil conformation; the sequence is NKEKDILNDLRDEGKLLNEEMEVNLNQIQEQCLVAKDMLA. In terms of domain architecture, B30.2/SPRY spans 306 to 500; that stretch reads PIQYIIWKEM…KEPLHIVHPQ (195 aa). Serine 342 is subject to Phosphoserine.

It belongs to the TRIM/RBCC family. Homo-multimer; required for antiviral activity. Interacts with PML. Phosphorylated. Phosphorylation is necessary for nuclear localization. Expressed in spermatid.

The protein localises to the cytoplasm. It localises to the nucleus. The protein resides in the nucleus speckle. It is found in the cytoskeleton. Its subcellular location is the microtubule organizing center. The protein localises to the centrosome. The catalysed reaction is S-ubiquitinyl-[E2 ubiquitin-conjugating enzyme]-L-cysteine + [acceptor protein]-L-lysine = [E2 ubiquitin-conjugating enzyme]-L-cysteine + N(6)-ubiquitinyl-[acceptor protein]-L-lysine.. The protein operates within protein modification; protein ubiquitination. In terms of biological role, E3 ubiquitin ligase that plays an important role in antiviral immunity by restricting different viral infections including dengue virus or vesicular stomatitis indiana virus. Ubiquitinates viral proteins such as dengue virus NS3 thereby limiting infection. In addition, acts as a key mediator of type I interferon induced microtubule stabilization by directly associating to microtubules independently of its E3 ligase activity. Also plays a role in cataract formation together with TP53. Mechanistically, inhibits UVB-induced cell apoptosis and reactive oxygen species (ROS) production by inducing TP53 ubiquitination. Regulates centrosome dynamics and mitotic progression by ubiquitinating STK3/MST2; leading to its redistribution to the perinuclear cytoskeleton and subsequent phosphorylation by PLK1. This Mus musculus (Mouse) protein is E3 ubiquitin-protein ligase TRIM69 (Trim69).